Reading from the N-terminus, the 78-residue chain is MASLIQVRDLLALRGRMEAAQISQTLNTPQPMINAMLQQLESMGKAVRIQEEPDGCLSGSCKSCPEGKACLREWWALR.

Iron-sulfur cluster is bound by residues cysteine 56, cysteine 61, cysteine 64, and cysteine 70.

It belongs to the FeoC family.

May function as a transcriptional regulator that controls feoABC expression. This Escherichia fergusonii (strain ATCC 35469 / DSM 13698 / CCUG 18766 / IAM 14443 / JCM 21226 / LMG 7866 / NBRC 102419 / NCTC 12128 / CDC 0568-73) protein is Probable [Fe-S]-dependent transcriptional repressor.